A 350-amino-acid polypeptide reads, in one-letter code: Arabinogalactan endo-beta-1,4-galactanase A (350 aa).

Residues 1–16 form the signal peptide; that stretch reads MIYPLLLSALPLLSSA. A glycan (N-linked (GlcNAc...) asparagine) is linked at asparagine 128. The active-site Proton donor is glutamate 152. Glutamate 262 (nucleophile) is an active-site residue.

This sequence belongs to the glycosyl hydrolase 53 family.

Its subcellular location is the secreted. The enzyme catalyses The enzyme specifically hydrolyzes (1-&gt;4)-beta-D-galactosidic linkages in type I arabinogalactans.. Functionally, endogalactanase involved in the degradation of plant cell wall polysaccharides, and more particularly of hairy regions of pectin. In Aspergillus niger, this protein is Arabinogalactan endo-beta-1,4-galactanase A (galA).